The following is a 942-amino-acid chain: PH and SEC7 domain-containing protein C11E3.11c (942 aa).

A compositionally biased stretch (polar residues) spans 1-18 (MSRNASNAYLKNGNSTPS). Disordered stretches follow at residues 1-128 (MSRN…TRLN) and 259-308 (SRNL…ETTR). The segment covering 24–40 (PSSLSQRSKTSTRSSKP) has biased composition (low complexity). Composition is skewed to polar residues over residues 50–60 (WFKNESSSRHP), 90–125 (ASMS…SSRT), 271–284 (YGNS…SSNY), and 292–305 (NRQS…STSE). An SEC7 domain is found at 295-497 (SSLSIPKSTS…LSSYKSFASN (203 aa)). In terms of domain architecture, PH spans 681–804 (PYIKQGILKF…WIDALNYWAA (124 aa)).

The polypeptide is PH and SEC7 domain-containing protein C11E3.11c (Schizosaccharomyces pombe (strain 972 / ATCC 24843) (Fission yeast)).